The chain runs to 347 residues: Eukaryotic translation initiation factor 3 subunit I (347 aa).

WD repeat units lie at residues Gly8–Thr47, Asp50–Ser89, Glu150–Lys190, Ile192–Lys233, and Gly289–Lys328.

This sequence belongs to the eIF-3 subunit I family. As to quaternary structure, component of the eukaryotic translation initiation factor 3 (eIF-3) complex.

The protein localises to the cytoplasm. Functionally, component of the eukaryotic translation initiation factor 3 (eIF-3) complex, which is involved in protein synthesis of a specialized repertoire of mRNAs and, together with other initiation factors, stimulates binding of mRNA and methionyl-tRNAi to the 40S ribosome. The eIF-3 complex specifically targets and initiates translation of a subset of mRNAs involved in cell proliferation. The sequence is that of Eukaryotic translation initiation factor 3 subunit I from Kluyveromyces lactis (strain ATCC 8585 / CBS 2359 / DSM 70799 / NBRC 1267 / NRRL Y-1140 / WM37) (Yeast).